We begin with the raw amino-acid sequence, 329 residues long: Ferredoxin--NAD(P)(+) reductase CarAd (329 aa).

Residues 2–92 enclose the 2Fe-2S ferredoxin-type domain; the sequence is YQLKIEGQAP…DLRIKVAVQD (91 aa). 4 residues coordinate [2Fe-2S] cluster: Cys-35, Cys-40, Cys-43, and Cys-76. The region spanning 100–200 is the FAD-binding FR-type domain; that stretch reads ISRMEAEVVE…TGPMGTSFFR (101 aa).

As to quaternary structure, monomer. Carbazole 1,9a-dioxygenase complex consists of a terminal oxygenase component CarAa, a ferredoxin reductase component CarAd and a ferredoxin component CarAc. The cofactor is [2Fe-2S] cluster. Requires FAD as cofactor.

It catalyses the reaction 2 reduced [2Fe-2S]-[ferredoxin] + NAD(+) + H(+) = 2 oxidized [2Fe-2S]-[ferredoxin] + NADH. The enzyme catalyses 2 reduced [2Fe-2S]-[ferredoxin] + NADP(+) + H(+) = 2 oxidized [2Fe-2S]-[ferredoxin] + NADPH. Functionally, part of the multicomponent carbazole 1,9a-dioxygenase (CARDO), that converts carbazole (CAR) into 2-aminobiphenyl-2,3-diol. It can use both NAD and NADP as electron donors, but NAD is supposed to be the physiological electron donor. In Metapseudomonas resinovorans (Pseudomonas resinovorans), this protein is Ferredoxin--NAD(P)(+) reductase CarAd (carAd).